We begin with the raw amino-acid sequence, 932 residues long: Isoleucine--tRNA ligase (932 aa).

The 'HIGH' region signature appears at 57–67 (PYANGNIHLGH). E552 serves as a coordination point for L-isoleucyl-5'-AMP. The 'KMSKS' region motif lies at 593-597 (KMSKS). K596 serves as a coordination point for ATP. The Zn(2+) site is built by C889, C892, C911, and C914.

This sequence belongs to the class-I aminoacyl-tRNA synthetase family. IleS type 1 subfamily. In terms of assembly, monomer. It depends on Zn(2+) as a cofactor.

Its subcellular location is the cytoplasm. It catalyses the reaction tRNA(Ile) + L-isoleucine + ATP = L-isoleucyl-tRNA(Ile) + AMP + diphosphate. Its function is as follows. Catalyzes the attachment of isoleucine to tRNA(Ile). As IleRS can inadvertently accommodate and process structurally similar amino acids such as valine, to avoid such errors it has two additional distinct tRNA(Ile)-dependent editing activities. One activity is designated as 'pretransfer' editing and involves the hydrolysis of activated Val-AMP. The other activity is designated 'posttransfer' editing and involves deacylation of mischarged Val-tRNA(Ile). The chain is Isoleucine--tRNA ligase from Lactococcus lactis subsp. lactis (strain IL1403) (Streptococcus lactis).